A 352-amino-acid polypeptide reads, in one-letter code: Adenosine deaminase (352 aa).

Residue alanine 2 is modified to N-acetylalanine. Zn(2+) contacts are provided by histidine 15 and histidine 17. Substrate is bound by residues histidine 17 and aspartate 19. Lysine 54 carries the N6-acetyllysine modification. Glycine 184 contacts substrate. Position 214 (histidine 214) interacts with Zn(2+). Catalysis depends on glutamate 217, which acts as the Proton donor. Position 232 is an N6-acetyllysine (lysine 232). Aspartate 295 is a Zn(2+) binding site. Substrate is bound at residue aspartate 296.

Belongs to the metallo-dependent hydrolases superfamily. Adenosine and AMP deaminases family. As to quaternary structure, interacts with DPP4 (via extracellular domain). Interacts with PLG (via Kringle 4 domain); the interaction stimulates PLG activation when in complex with DPP4. It depends on Zn(2+) as a cofactor. Detected in brain neurons in the median emninence (at protein level). Expressed in secondary deciduum (at protein level). Found in all tissues, occurs in large amounts in T-lymphocytes and, at the time of weaning, in gastrointestinal tissues.

It localises to the cell membrane. It is found in the cell junction. Its subcellular location is the cytoplasmic vesicle lumen. The protein localises to the cytoplasm. The protein resides in the lysosome. It carries out the reaction adenosine + H2O + H(+) = inosine + NH4(+). The catalysed reaction is 2'-deoxyadenosine + H2O + H(+) = 2'-deoxyinosine + NH4(+). It catalyses the reaction cordycepin + H2O + H(+) = 3'-deoxyinosine + NH4(+). Catalyzes the hydrolytic deamination of adenosine and 2-deoxyadenosine. Plays an important role in purine metabolism and in adenosine homeostasis. Modulates signaling by extracellular adenosine, and so contributes indirectly to cellular signaling events. Acts as a positive regulator of T-cell coactivation, by binding DPP4. Its interaction with DPP4 regulates lymphocyte-epithelial cell adhesion. Enhances dendritic cell immunogenicity by affecting dendritic cell costimulatory molecule expression and cytokines and chemokines secretion. Enhances CD4+ T-cell differentiation and proliferation. Acts as a positive modulator of adenosine receptors ADORA1 and ADORA2A, by enhancing their ligand affinity via conformational change. Stimulates plasminogen activation. Plays a role in male fertility. Plays a protective role in early postimplantation embryonic development. Also responsible for the deamination of cordycepin (3'-deoxyadenosine), a fungal natural product that shows antitumor, antibacterial, antifungal, antivirus, and immune regulation properties. In Mus musculus (Mouse), this protein is Adenosine deaminase (Ada).